The chain runs to 284 residues: Interferon antagonist OPG040 (284 aa).

6 ANK repeats span residues 29 to 58, 60 to 89, 93 to 122, 127 to 157, 159 to 188, and 193 to 222; these read HGHSALYYAIADNNVRLVCTLLNAGALKNL, ENEFPLHQAATLEDTKIVKILLFSGLDDSQ, KGNTALYYAVDSGNMQTVKLFVKKNWRLMF, GWKTSFYHAVMLNDVSIVSYFLSEIPSTFDL, ILLSCIHITIKNGHVDMMILLLDYMTSTNT, and LFIPDIKLAIDNKDIEMLQALFKYDINIYS.

Belongs to the orthopoxvirus OPG039 family.

It localises to the host cytoplasm. The protein resides in the host nucleus. In terms of biological role, inhibits antiviral activity induced by type I interferons. Does not block signal transduction of IFN, but is important to counter the host antiviral state induced by a pre-treatment with IFN. Plays a role in the inhibition of host NF-kappa-B activation by preventing the acetylation of the RELA/p65 subunit of NF-kappaB. The sequence is that of Interferon antagonist OPG040 (OPG039) from Bos taurus (Bovine).